We begin with the raw amino-acid sequence, 507 residues long: Probable bifunctional methylthioribulose-1-phosphate dehydratase/enolase-phosphatase E1 (507 aa).

Alanine 2 carries the N-acetylalanine modification. Residues alanine 2 to aspartate 237 are methylthioribulose-1-phosphate dehydratase. Cysteine 109 serves as a coordination point for substrate. Residues histidine 127 and histidine 129 each contribute to the Zn(2+) site. Residue glutamate 152 is the Proton donor/acceptor of the active site. Histidine 202 serves as a coordination point for Zn(2+). The segment at isoleucine 268–isoleucine 507 is enolase-phosphatase E1. Mg(2+) is bound by residues aspartate 271 and glutamate 273. Substrate contacts are provided by residues serine 406–serine 407 and lysine 440. A Mg(2+)-binding site is contributed by aspartate 466.

It in the N-terminal section; belongs to the aldolase class II family. MtnB subfamily. The protein in the C-terminal section; belongs to the HAD-like hydrolase superfamily. MasA/MtnC family. Zn(2+) serves as cofactor. It depends on Mg(2+) as a cofactor.

The catalysed reaction is 5-(methylsulfanyl)-D-ribulose 1-phosphate = 5-methylsulfanyl-2,3-dioxopentyl phosphate + H2O. It carries out the reaction 5-methylsulfanyl-2,3-dioxopentyl phosphate + H2O = 1,2-dihydroxy-5-(methylsulfanyl)pent-1-en-3-one + phosphate. It functions in the pathway amino-acid biosynthesis; L-methionine biosynthesis via salvage pathway; L-methionine from S-methyl-5-thio-alpha-D-ribose 1-phosphate: step 2/6. The protein operates within amino-acid biosynthesis; L-methionine biosynthesis via salvage pathway; L-methionine from S-methyl-5-thio-alpha-D-ribose 1-phosphate: step 3/6. It participates in amino-acid biosynthesis; L-methionine biosynthesis via salvage pathway; L-methionine from S-methyl-5-thio-alpha-D-ribose 1-phosphate: step 4/6. The protein is Probable bifunctional methylthioribulose-1-phosphate dehydratase/enolase-phosphatase E1 of Arabidopsis thaliana (Mouse-ear cress).